The primary structure comprises 655 residues: p-hydroxybenzoic acid efflux pump subunit AaeB (655 aa).

The next 10 helical transmembrane spans lie at 13–33 (FAVK…HFQL), 38–58 (WAVL…GGEP), 69–89 (LRII…IAMI), 93–113 (LLMI…SSLV), 121–141 (WGLA…EPLL), 152–172 (EIVI…PRSI), 370–390 (LFWL…IAVV), 407–427 (FIYG…VIIP), 431–451 (QSML…GIEV), and 482–502 (FLDS…VILL).

Belongs to the aromatic acid exporter ArAE (TC 2.A.85) family.

The protein resides in the cell inner membrane. In terms of biological role, forms an efflux pump with AaeA. Could function as a metabolic relief valve, allowing to eliminate certain compounds when they accumulate to high levels in the cell. This Shigella dysenteriae serotype 1 (strain Sd197) protein is p-hydroxybenzoic acid efflux pump subunit AaeB.